We begin with the raw amino-acid sequence, 372 residues long: Sesquiterpene synthase Agr9 (372 aa).

Asp87, Asn225, Ser229, and Glu233 together coordinate Mg(2+). The DDXXD motif motif lies at 87–91 (DEYTD). (2E,6E)-farnesyl diphosphate is bound by residues Arg314 and Tyr315.

Belongs to the terpene synthase family. Mg(2+) is required as a cofactor.

It carries out the reaction (2E,6E)-farnesyl diphosphate = gamma-muurolene + diphosphate. The catalysed reaction is (2E,6E)-farnesyl diphosphate = delta-cadinene + diphosphate. In terms of biological role, terpene cyclase that catalyzes the cyclization of farnesyl diphosphate (FPP) to various sesquiterpenes, including gamma-muurolene, beta-cadinene and delta-cadinene. This Cyclocybe aegerita (Black poplar mushroom) protein is Sesquiterpene synthase Agr9.